A 669-amino-acid chain; its full sequence is MRRRHRCVALLFIFSAFITPLGFFYYTISNESKRYSEESEKNYGYQTLEFTESPEEISVDFDKYSQSECSRFPSNVEIEYPECLNKMKWIKNGWKTHHCYIENHIDGSECSFRYYLSQVENYCPPMEHHGKRKGLAKISPSIRRLLPIFESIPHYMKTRINRLWKKWKEGAHEVMQKYPKSMIERRKLNVLVFIGFLANEQKLNMAKKSDHGGPLGELLQWSDLLATLSVIGHHLEVSTNKNTLRNIVWKYMSRGPCQYVNNFRQQLDIIFTDIMGFNILRQHHRQFLLSNRCRIRLLDSFGTHAEFTTKTYFVQNKKSLSGPFSQRNPWGGHGLDLRQHWTFYPHSDDNTFLGFVVDTEGIDKKNNQMIPSALVYGKEQYMWRDAEKPIDVLKRIVTVHSTVADLDLKDSNISSIFKKVQNHGFLNSEEISQLLDNITIFFGLGFPLEGPAPLEAMAHGAVFINAKFKEPKSRLNYKFLAEKPTLRKWTSQNPYMEKIGEPHVITVDIFNELELEEAIKRAISLKPKHFVPFEFTPAGMLHRVALLLEKQELCDKIAYSKRWPPIDQMKIFRTLNADDSCETICHSKQLLCEPSYFPIINSSPLLRRENLCSSTTSDSSPFAPFNCTIQQSAFLFSCASSPPISFEINRLCPCRDYIPEQHAICKKCL.

Topologically, residues 1-7 (MRRRHRC) are cytoplasmic. The helical; Signal-anchor for type II membrane protein transmembrane segment at 8–28 (VALLFIFSAFITPLGFFYYTI) threads the bilayer. The Lumenal portion of the chain corresponds to 29–669 (SNESKRYSEE…EQHAICKKCL (641 aa)). 4 N-linked (GlcNAc...) asparagine glycosylation sites follow: Asn30, Asn412, Asn437, and Asn626.

It belongs to the glycosyltransferase 18 family. As to expression, expressed in a complex subset of neurons in larvae and in the spermathecal and pharyngeal-intestinal valves and certain vulval cells of adults.

Its subcellular location is the golgi apparatus membrane. The catalysed reaction is N(4)-{beta-D-GlcNAc-(1-&gt;2)-[beta-D-GlcNAc-(1-&gt;4)]-alpha-D-Man-(1-&gt;3)-[beta-D-GlcNAc-(1-&gt;2)-alpha-D-Man-(1-&gt;6)]-beta-D-Man-(1-&gt;4)-beta-D-GlcNAc-(1-&gt;4)-beta-D-GlcNAc}-L-asparaginyl-[protein] + UDP-N-acetyl-alpha-D-glucosamine = N(4)-{beta-D-GlcNAc-(1-&gt;2)-[beta-D-GlcNAc-(1-&gt;4)]-alpha-D-Man-(1-&gt;3)-[beta-D-GlcNAc-(1-&gt;2)-[beta-D-GlcNAc-(1-&gt;6)]-alpha-D-Man-(1-&gt;6)]-beta-D-Man-(1-&gt;4)-beta-D-GlcNAc-(1-&gt;4)-beta-D-GlcNAc}-L-asparaginyl-[protein] + UDP + H(+). It participates in protein modification; protein glycosylation. In terms of biological role, catalyzes the addition of N-acetylglucosamine (GlcNAc) in beta 1-6 linkage to the alpha-linked mannose of biantennary N-linked oligosaccharides. In Caenorhabditis elegans, this protein is Alpha-1,6-mannosylglycoprotein 6-beta-N-acetylglucosaminyltransferase (gly-2).